A 506-amino-acid chain; its full sequence is Deoxyribodipyrimidine photo-lyase (506 aa).

The span at 1–21 shows a compositional bias: pro residues; sequence MPPTSVSPPRTAPGPANPSPA. Positions 1-33 are disordered; the sequence is MPPTSVSPPRTAPGPANPSPAHPSRVRVIHPGG. In terms of domain architecture, Photolyase/cryptochrome alpha/beta spans 38 to 171; sequence GPVVYWMLRD…AVHQVDAHNV (134 aa). FAD is bound by residues Tyr268 and 282 to 285; that span reads SGLS. Ser312 carries the phosphoserine modification. FAD is bound by residues 319-327, Lys390, Asn421, Asp427, and 427-429; these read ELVVRRELA and DGR. Residues 487-506 are disordered; the sequence is KKRNAEESPNPVVKLSKSQH.

Belongs to the DNA photolyase class-2 family. FAD is required as a cofactor. In terms of tissue distribution, expressed in proliferating tissues. Highly expressed in roots and shoot apical meristem (SAM). Expressed in leaves, flag leaves, and panicle.

The protein resides in the nucleus. It catalyses the reaction cyclobutadipyrimidine (in DNA) = 2 pyrimidine residues (in DNA).. In terms of biological role, involved in repair of UV radiation-induced DNA damage. Catalyzes the light-dependent monomerization (300-600 nm) of cyclobutylpyrimidine dimers (CPDs), which are formed between adjacent bases on the same DNA strand upon exposure to ultraviolet radiation. Required for plant survival in the presence of UV-B light. Not involved in the repair of (6-4) photoproducts. In Oryza sativa subsp. japonica (Rice), this protein is Deoxyribodipyrimidine photo-lyase (PHR).